The primary structure comprises 186 residues: Adenine phosphoribosyltransferase (186 aa).

The protein belongs to the purine/pyrimidine phosphoribosyltransferase family. Homodimer.

Its subcellular location is the cytoplasm. It catalyses the reaction AMP + diphosphate = 5-phospho-alpha-D-ribose 1-diphosphate + adenine. It participates in purine metabolism; AMP biosynthesis via salvage pathway; AMP from adenine: step 1/1. In terms of biological role, catalyzes a salvage reaction resulting in the formation of AMP, that is energically less costly than de novo synthesis. This is Adenine phosphoribosyltransferase from Xanthomonas euvesicatoria pv. vesicatoria (strain 85-10) (Xanthomonas campestris pv. vesicatoria).